We begin with the raw amino-acid sequence, 125 residues long: Large ribosomal subunit protein bL12 (125 aa).

Belongs to the bacterial ribosomal protein bL12 family. As to quaternary structure, homodimer. Part of the ribosomal stalk of the 50S ribosomal subunit. Forms a multimeric L10(L12)X complex, where L10 forms an elongated spine to which 2 to 4 L12 dimers bind in a sequential fashion. Binds GTP-bound translation factors.

Its function is as follows. Forms part of the ribosomal stalk which helps the ribosome interact with GTP-bound translation factors. Is thus essential for accurate translation. This Coprothermobacter proteolyticus (strain ATCC 35245 / DSM 5265 / OCM 4 / BT) protein is Large ribosomal subunit protein bL12.